A 210-amino-acid polypeptide reads, in one-letter code: LexA repressor (210 aa).

The H-T-H motif DNA-binding region spans 30-50 (RVEIAREIGFKSPNAAEEHLK). Catalysis depends on for autocatalytic cleavage activity residues serine 127 and lysine 164.

This sequence belongs to the peptidase S24 family. In terms of assembly, homodimer.

It catalyses the reaction Hydrolysis of Ala-|-Gly bond in repressor LexA.. Functionally, represses a number of genes involved in the response to DNA damage (SOS response), including recA and lexA. In the presence of single-stranded DNA, RecA interacts with LexA causing an autocatalytic cleavage which disrupts the DNA-binding part of LexA, leading to derepression of the SOS regulon and eventually DNA repair. The sequence is that of LexA repressor from Actinobacillus pleuropneumoniae serotype 7 (strain AP76).